We begin with the raw amino-acid sequence, 263 residues long: uncharacterized protein (263 aa).

The Response regulatory domain maps to 6-121; the sequence is TAIIADDEPL…RLQTTCERVK (116 aa). The residue at position 58 (aspartate 58) is a 4-aspartylphosphate. The HTH LytTR-type domain occupies 158–263; it reads IKATQGDDIH…RASQSLFKGM (106 aa).

This is an uncharacterized protein from Vibrio parahaemolyticus serotype O3:K6 (strain RIMD 2210633).